The primary structure comprises 806 residues: Leucine--tRNA ligase (806 aa).

The 'HIGH' region motif lies at 54–64; that stretch reads SYPSGDLHMGH. The 'KMSKS' region signature appears at 571-575; it reads KMSKS. Lys574 is an ATP binding site.

Belongs to the class-I aminoacyl-tRNA synthetase family.

It localises to the cytoplasm. The enzyme catalyses tRNA(Leu) + L-leucine + ATP = L-leucyl-tRNA(Leu) + AMP + diphosphate. The chain is Leucine--tRNA ligase from Tropheryma whipplei (strain Twist) (Whipple's bacillus).